The primary structure comprises 322 residues: Probable cell division protein WhiA (322 aa).

The H-T-H motif DNA-binding region spans 279–312; sequence SLKELGELWTPPVGKSGVNHRIRKIERLAEKLRS.

This sequence belongs to the WhiA family.

In terms of biological role, involved in cell division and chromosome segregation. The protein is Probable cell division protein WhiA of Desulforamulus reducens (strain ATCC BAA-1160 / DSM 100696 / MI-1) (Desulfotomaculum reducens).